The following is a 321-amino-acid chain: 2,3,4,5-tetrahydropyridine-2,6-dicarboxylate N-succinyltransferase (321 aa).

Mg(2+) contacts are provided by D166 and E183. E199 functions as the Acyl-anhydride intermediate in the catalytic mechanism. Succinyl-CoA-binding positions include R201, G216, S219, A242, 257 to 258, G265, K281, and 294 to 297; these read EA and RRNS.

Belongs to the type 2 tetrahydrodipicolinate N-succinyltransferase family. As to quaternary structure, homotrimer.

The protein localises to the cytoplasm. The enzyme catalyses (S)-2,3,4,5-tetrahydrodipicolinate + succinyl-CoA + H2O = (S)-2-succinylamino-6-oxoheptanedioate + CoA. It functions in the pathway amino-acid biosynthesis; L-lysine biosynthesis via DAP pathway; LL-2,6-diaminopimelate from (S)-tetrahydrodipicolinate (succinylase route): step 1/3. Functionally, catalyzes the conversion of the cyclic tetrahydrodipicolinate (THDP) into the acyclic N-succinyl-L-2-amino-6-oxopimelate using succinyl-CoA. In Rothia mucilaginosa (strain DY-18) (Stomatococcus mucilaginosus), this protein is 2,3,4,5-tetrahydropyridine-2,6-dicarboxylate N-succinyltransferase.